The primary structure comprises 195 residues: Segregation and condensation protein B (195 aa).

It belongs to the ScpB family. Homodimer. Homodimerization may be required to stabilize the binding of ScpA to the Smc head domains. Component of a cohesin-like complex composed of ScpA, ScpB and the Smc homodimer, in which ScpA and ScpB bind to the head domain of Smc. The presence of the three proteins is required for the association of the complex with DNA.

It is found in the cytoplasm. In terms of biological role, participates in chromosomal partition during cell division. May act via the formation of a condensin-like complex containing Smc and ScpA that pull DNA away from mid-cell into both cell halves. This chain is Segregation and condensation protein B, found in Clostridium perfringens (strain SM101 / Type A).